Reading from the N-terminus, the 558-residue chain is Nucleoprotein (558 aa).

Residues 54-237 (MRKEKRDDKD…ITEQQSSINI (184 aa)) form a binding site for the cap structure m7GTP region. Mg(2+) contacts are provided by D382 and E384. Mn(2+)-binding residues include D382 and E384. Zn(2+) contacts are provided by E392, C499, H502, and C518. D522 contacts Mg(2+). D522 lines the Mn(2+) pocket.

Belongs to the arenaviridae nucleocapsid protein family. As to quaternary structure, homomultimerizes to form the nucleocapsid. Binds to viral genomic RNA. Interacts with glycoprotein G2. Interacts with protein Z; this interaction probably directs the encapsidated genome to budding sites. Interacts with protein L; this interaction does not interfere with Z-L interaction. Interacts with host IKBKE (via Protein kinase domain); the interaction inhibits IKBKE kinase activity.

It localises to the virion. It is found in the host cytoplasm. Functionally, encapsidates the genome, protecting it from nucleases. The encapsidated genomic RNA is termed the nucleocapsid (NC). Serves as template for viral transcription and replication. The increased presence of protein N in host cell does not seem to trigger the switch from transcription to replication as observed in other negative strain RNA viruses. Through the interaction with host IKBKE, strongly inhibits the phosphorylation and nuclear translocation of host IRF3, a protein involved in interferon activation pathway, leading to the inhibition of interferon-beta and IRF3-dependent promoters activation. Also encodes a functional 3'-5' exoribonuclease that degrades preferentially dsRNA substrates and thereby participates in the suppression of interferon induction. The protein is Nucleoprotein of Lymphocytic choriomeningitis virus (strain Armstrong) (LCMV).